A 207-amino-acid polypeptide reads, in one-letter code: Dephospho-CoA kinase (207 aa).

The DPCK domain maps to 10–207; the sequence is ILGLTGGIGS…FYLTLRGGQS (198 aa). Residue 18 to 23 participates in ATP binding; the sequence is GSGKSA.

Belongs to the CoaE family.

The protein resides in the cytoplasm. It catalyses the reaction 3'-dephospho-CoA + ATP = ADP + CoA + H(+). It participates in cofactor biosynthesis; coenzyme A biosynthesis; CoA from (R)-pantothenate: step 5/5. Its function is as follows. Catalyzes the phosphorylation of the 3'-hydroxyl group of dephosphocoenzyme A to form coenzyme A. The polypeptide is Dephospho-CoA kinase (Pseudomonas savastanoi pv. phaseolicola (strain 1448A / Race 6) (Pseudomonas syringae pv. phaseolicola (strain 1448A / Race 6))).